A 261-amino-acid chain; its full sequence is 5-hmdU DNA kinase (261 aa).

Belongs to the thymidylate kinase family. 5-hmdU DNA kinase subfamily.

It carries out the reaction 5-hydroxymethyl-dUMP in DNA + ATP = 5-phosphomethyl-dUMP in DNA + ADP + H(+). Functionally, phosphorylates 5-hydroxymethyluracil (5hmdU) into 5-phosphomethyl-2'-deoxyuridine (5- PmdU) on DNA as a step in the pathway leading to thymidine hypermodifications in the viral genome. As a final result of the pathway of hypermodification, 5-Nalpha-putrescinylthymidine (Nalpha-PutT) substitutes for about 50% of thymidines in the viral DNA. These modifications probably prevent degradation of viral genome by the host restriction-modification antiviral defense system. This is 5-hmdU DNA kinase from Delftia phage PhiW-14 (Deftia acidovorans bacteriophage phiW-14).